A 335-amino-acid polypeptide reads, in one-letter code: Ketol-acid reductoisomerase (NADP(+)) 2 (335 aa).

The KARI N-terminal Rossmann domain maps to 1 to 180; sequence MKTYYEKDAN…GCTRAGVIET (180 aa). Residues 24 to 27, Arg47, Ser51, and 81 to 84 each bind NADP(+); these read YGSQ and DEQQ. Residue His106 is part of the active site. Position 132 (Gly132) interacts with NADP(+). The KARI C-terminal knotted domain maps to 181 to 326; the sequence is TFQEETETDL…AELREMMSWI (146 aa). Residues Asp189, Glu193, Glu225, and Glu229 each contribute to the Mg(2+) site. Ser250 serves as a coordination point for substrate.

Belongs to the ketol-acid reductoisomerase family. The cofactor is Mg(2+).

The catalysed reaction is (2R)-2,3-dihydroxy-3-methylbutanoate + NADP(+) = (2S)-2-acetolactate + NADPH + H(+). The enzyme catalyses (2R,3R)-2,3-dihydroxy-3-methylpentanoate + NADP(+) = (S)-2-ethyl-2-hydroxy-3-oxobutanoate + NADPH + H(+). Its pathway is amino-acid biosynthesis; L-isoleucine biosynthesis; L-isoleucine from 2-oxobutanoate: step 2/4. It functions in the pathway amino-acid biosynthesis; L-valine biosynthesis; L-valine from pyruvate: step 2/4. Functionally, involved in the biosynthesis of branched-chain amino acids (BCAA). Catalyzes an alkyl-migration followed by a ketol-acid reduction of (S)-2-acetolactate (S2AL) to yield (R)-2,3-dihydroxy-isovalerate. In the isomerase reaction, S2AL is rearranged via a Mg-dependent methyl migration to produce 3-hydroxy-3-methyl-2-ketobutyrate (HMKB). In the reductase reaction, this 2-ketoacid undergoes a metal-dependent reduction by NADPH to yield (R)-2,3-dihydroxy-isovalerate. The polypeptide is Ketol-acid reductoisomerase (NADP(+)) 2 (Bacillus cereus (strain ATCC 10987 / NRS 248)).